The following is a 285-amino-acid chain: Probable endonuclease 4 (285 aa).

Zn(2+) contacts are provided by histidine 69, histidine 109, glutamate 145, aspartate 179, histidine 182, histidine 216, aspartate 229, histidine 231, and glutamate 261.

The protein belongs to the AP endonuclease 2 family. It depends on Zn(2+) as a cofactor.

It carries out the reaction Endonucleolytic cleavage to 5'-phosphooligonucleotide end-products.. In terms of biological role, endonuclease IV plays a role in DNA repair. It cleaves phosphodiester bonds at apurinic or apyrimidinic (AP) sites, generating a 3'-hydroxyl group and a 5'-terminal sugar phosphate. This is Probable endonuclease 4 from Salmonella typhimurium (strain LT2 / SGSC1412 / ATCC 700720).